Consider the following 71-residue polypeptide: Beta-defensin 131A (71 aa).

Residues 1 to 22 (MRVLFFVFGVLSLMFTVPPARS) form the signal peptide. Cystine bridges form between Cys-29/Cys-57, Cys-37/Cys-51, and Cys-41/Cys-58.

The protein belongs to the beta-defensin family.

The protein resides in the secreted. Functionally, has antibacterial activity. Upon stimulation with lipoteichoic acid, promotes cytokines and chemokines production and secretion. The protein is Beta-defensin 131A of Pan troglodytes (Chimpanzee).